A 260-amino-acid chain; its full sequence is MICOS complex subunit mic25-a (260 aa).

Residues 1–92 are disordered; the sequence is MGGSESTGRK…KPTARGVGHQ (92 aa). Gly2 carries the N-myristoyl glycine lipid modification. A compositionally biased stretch (basic and acidic residues) spans 28–39; it reads RLSDEVVNRMKD. A compositionally biased stretch (low complexity) spans 48–64; the sequence is STSTASGTTSGPTTFPS. Residues 94-187 are a coiled coil; the sequence is AEEDLYRRYE…LNSIEKKNLE (94 aa). The 43-residue stretch at 213–255 folds into the CHCH domain; sequence DPVCMDLQSNILKCYAENKQERLNCSDLAKEYGKCVSAAQKNL. 2 consecutive short sequence motifs (cx9C motif) follow at residues 216-226 and 237-247; these read CMDLQSNILKC and CSDLAKEYGKC. 2 disulfides stabilise this stretch: Cys216–Cys247 and Cys226–Cys237.

It belongs to the MICOS complex subunit Mic19 family. Metazoan Mic25 subfamily. In terms of assembly, component of the mitochondrial contact site and cristae organizing system (MICOS) complex (also known as MINOS or MitOS complex).

The protein localises to the mitochondrion inner membrane. Functionally, component of the MICOS complex, a large protein complex of the mitochondrial inner membrane that plays crucial roles in the maintenance of crista junctions, inner membrane architecture, and formation of contact sites to the outer membrane. The protein is MICOS complex subunit mic25-a (chchd6-a) of Xenopus laevis (African clawed frog).